Here is a 541-residue protein sequence, read N- to C-terminus: CTP synthase (541 aa).

Residues 1-268 are amidoligase domain; sequence MAKFIFITGG…AEIVCRRLGL (268 aa). Residue serine 13 coordinates CTP. A UTP-binding site is contributed by serine 13. ATP is bound by residues 14–19 and aspartate 71; that span reads GLGKGI. Residues aspartate 71 and glutamate 141 each contribute to the Mg(2+) site. CTP-binding positions include 148–150, 189–194, and lysine 225; these read DIE and KTKPTQ. Residues 189-194 and lysine 225 each bind UTP; that span reads KTKPTQ. A Glutamine amidotransferase type-1 domain is found at 293–539; sequence EIALVGKYVA…IKAALEYRAG (247 aa). Glycine 359 lines the L-glutamine pocket. Cysteine 386 functions as the Nucleophile; for glutamine hydrolysis in the catalytic mechanism. Residues 387 to 390, glutamate 410, and arginine 467 each bind L-glutamine; that span reads MGMQ. Residues histidine 512 and glutamate 514 contribute to the active site.

It belongs to the CTP synthase family. In terms of assembly, homotetramer.

It carries out the reaction UTP + L-glutamine + ATP + H2O = CTP + L-glutamate + ADP + phosphate + 2 H(+). It catalyses the reaction L-glutamine + H2O = L-glutamate + NH4(+). The catalysed reaction is UTP + NH4(+) + ATP = CTP + ADP + phosphate + 2 H(+). It functions in the pathway pyrimidine metabolism; CTP biosynthesis via de novo pathway; CTP from UDP: step 2/2. Allosterically activated by GTP, when glutamine is the substrate; GTP has no effect on the reaction when ammonia is the substrate. The allosteric effector GTP functions by stabilizing the protein conformation that binds the tetrahedral intermediate(s) formed during glutamine hydrolysis. Inhibited by the product CTP, via allosteric rather than competitive inhibition. In terms of biological role, catalyzes the ATP-dependent amination of UTP to CTP with either L-glutamine or ammonia as the source of nitrogen. Regulates intracellular CTP levels through interactions with the four ribonucleotide triphosphates. This is CTP synthase from Symbiobacterium thermophilum (strain DSM 24528 / JCM 14929 / IAM 14863 / T).